Consider the following 303-residue polypeptide: tRNA pseudouridine synthase B (303 aa).

The active-site Nucleophile is aspartate 53.

It belongs to the pseudouridine synthase TruB family. Type 1 subfamily.

It catalyses the reaction uridine(55) in tRNA = pseudouridine(55) in tRNA. In terms of biological role, responsible for synthesis of pseudouridine from uracil-55 in the psi GC loop of transfer RNAs. The polypeptide is tRNA pseudouridine synthase B (Zymomonas mobilis subsp. mobilis (strain ATCC 31821 / ZM4 / CP4)).